The chain runs to 165 residues: DNA mimic protein DMP19 (165 aa).

Belongs to the DMP19-like protein family. As to quaternary structure, monomer. Homodimer. The monomeric form of DMP19 interacts with the DNA-binding protein HU homodimer with 1:1 stoichiometry. The dimeric form of DMP19 interacts with the Neisseria hypothetical transcription factor (NHTF) dimer.

With respect to regulation, activity can be modulated in vitro by crown ethers, which are small cyclic polyethers that can modify protein surface behavior dramatically by stabilizing either intra- or intermolecular interactions, thereby probably altering the protein's tertiary and quaternary structure. Functionally, acts as a DNA mimic. Interacts with DNA-binding proteins and prevents their binding to DNA by occupying the DNA binding sites on the proteins, acting as a competitive inhibitor. DMP19 is a bifunctional DNA mimic protein involved in controlling nucleoid formation as well as gene regulation. This bifunctionality depends on different oligomeric states. The monomeric form interacts with the DNA-binding protein HU, which prevents HU from binding to DNA and forming nucleoids. The dimeric form interacts with the Neisseria hypothetical transcription factor (NHTF) and prevents NHTF from binding to its DNA-binding sites, thereby blocking its repressor activity and influencing expression of the target genes. DMP19 might use these different oligomerizations to regulate genes in two steps: the monomeric form may first release selected gene regions in chromosomal DNA by preventing HU from binding to DNA and forming nucleoids, then the dimeric form blocks the gene repressor activity of NHTF and ensures the continued expression of NHTF-controlled genes. This Neisseria meningitidis serogroup B (strain ATCC BAA-335 / MC58) protein is DNA mimic protein DMP19.